Reading from the N-terminus, the 392-residue chain is 8-amino-7-oxononanoate synthase 1 (392 aa).

109-110 (GF) contributes to the pyridoxal 5'-phosphate binding site. Histidine 134 contacts substrate. Residues serine 181, 206-209 (DDAH), and 237-240 (TLSK) contribute to the pyridoxal 5'-phosphate site. An N6-(pyridoxal phosphate)lysine modification is found at lysine 240. Residue threonine 354 participates in substrate binding.

The protein belongs to the class-II pyridoxal-phosphate-dependent aminotransferase family. BioF subfamily. Homodimer. Pyridoxal 5'-phosphate serves as cofactor.

The enzyme catalyses 6-carboxyhexanoyl-[ACP] + L-alanine + H(+) = (8S)-8-amino-7-oxononanoate + holo-[ACP] + CO2. The protein operates within cofactor biosynthesis; biotin biosynthesis. In terms of biological role, catalyzes the decarboxylative condensation of pimeloyl-[acyl-carrier protein] and L-alanine to produce 8-amino-7-oxononanoate (AON), [acyl-carrier protein], and carbon dioxide. This is 8-amino-7-oxononanoate synthase 1 (kbl) from Bacillus subtilis (strain 168).